A 300-amino-acid chain; its full sequence is Probable protein phosphatase 2C 2 (300 aa).

The PPM-type phosphatase domain maps to 23–298 (IFAASEMQGW…DNMTTILVYL (276 aa)). Positions 57, 58, 237, and 289 each coordinate Mn(2+).

It belongs to the PP2C family. Mg(2+) serves as cofactor. It depends on Mn(2+) as a cofactor.

Its subcellular location is the membrane. It carries out the reaction O-phospho-L-seryl-[protein] + H2O = L-seryl-[protein] + phosphate. It catalyses the reaction O-phospho-L-threonyl-[protein] + H2O = L-threonyl-[protein] + phosphate. Enzyme with a broad specificity. The polypeptide is Probable protein phosphatase 2C 2 (Paramecium tetraurelia).